The primary structure comprises 275 residues: NH(3)-dependent NAD(+) synthetase (275 aa).

46-53 (GISGGQDS) is an ATP binding site. Residue Asp52 coordinates Mg(2+). Residue Arg140 participates in deamido-NAD(+) binding. Thr160 provides a ligand contact to ATP. Glu165 is a Mg(2+) binding site. Deamido-NAD(+)-binding residues include Lys173 and Asp180. Residues Lys189 and Thr211 each coordinate ATP. 260–261 (HK) is a binding site for deamido-NAD(+).

The protein belongs to the NAD synthetase family. As to quaternary structure, homodimer.

The catalysed reaction is deamido-NAD(+) + NH4(+) + ATP = AMP + diphosphate + NAD(+) + H(+). Its pathway is cofactor biosynthesis; NAD(+) biosynthesis; NAD(+) from deamido-NAD(+) (ammonia route): step 1/1. Catalyzes the ATP-dependent amidation of deamido-NAD to form NAD. Uses ammonia as a nitrogen source. In Escherichia coli O45:K1 (strain S88 / ExPEC), this protein is NH(3)-dependent NAD(+) synthetase.